Consider the following 146-residue polypeptide: Large ribosomal subunit protein uL15 (146 aa).

The tract at residues 1-56 is disordered; the sequence is MGLRLNELSPGVGAKKTAQRRGRGIGSGLGKTGGRGVKGQKSRSGSSVRSGFEGGQ. Positions 24–37 are enriched in gly residues; that stretch reads GIGSGLGKTGGRGV.

The protein belongs to the universal ribosomal protein uL15 family. Part of the 50S ribosomal subunit.

In terms of biological role, binds to the 23S rRNA. The polypeptide is Large ribosomal subunit protein uL15 (Psychrobacter arcticus (strain DSM 17307 / VKM B-2377 / 273-4)).